A 206-amino-acid chain; its full sequence is 2,3-bisphosphoglycerate-dependent phosphoglycerate mutase (206 aa).

Residues 9-16 (RHGQSEWN), 22-23 (TG), Arg-61, 88-91 (ERDY), Lys-99, 115-116 (RR), and 159-160 (GN) contribute to the substrate site. Residue His-10 is the Tele-phosphohistidine intermediate of the active site. Glu-88 acts as the Proton donor/acceptor in catalysis.

Belongs to the phosphoglycerate mutase family. BPG-dependent PGAM subfamily. Homodimer.

It carries out the reaction (2R)-2-phosphoglycerate = (2R)-3-phosphoglycerate. It functions in the pathway carbohydrate degradation; glycolysis; pyruvate from D-glyceraldehyde 3-phosphate: step 3/5. Its function is as follows. Catalyzes the interconversion of 2-phosphoglycerate and 3-phosphoglycerate. In Brucella melitensis biotype 2 (strain ATCC 23457), this protein is 2,3-bisphosphoglycerate-dependent phosphoglycerate mutase.